We begin with the raw amino-acid sequence, 307 residues long: Aspartate carbamoyltransferase catalytic subunit (307 aa).

Carbamoyl phosphate-binding residues include Arg54 and Thr55. An L-aspartate-binding site is contributed by Lys83. Carbamoyl phosphate is bound by residues Arg104, His132, and Gln135. The L-aspartate site is built by Arg165 and Arg228. The carbamoyl phosphate site is built by Leu267 and Pro268.

The protein belongs to the aspartate/ornithine carbamoyltransferase superfamily. ATCase family. Heterododecamer (2C3:3R2) of six catalytic PyrB chains organized as two trimers (C3), and six regulatory PyrI chains organized as three dimers (R2).

The enzyme catalyses carbamoyl phosphate + L-aspartate = N-carbamoyl-L-aspartate + phosphate + H(+). The protein operates within pyrimidine metabolism; UMP biosynthesis via de novo pathway; (S)-dihydroorotate from bicarbonate: step 2/3. Catalyzes the condensation of carbamoyl phosphate and aspartate to form carbamoyl aspartate and inorganic phosphate, the committed step in the de novo pyrimidine nucleotide biosynthesis pathway. This Clostridium botulinum (strain Eklund 17B / Type B) protein is Aspartate carbamoyltransferase catalytic subunit.